Here is a 191-residue protein sequence, read N- to C-terminus: Reticulon-like protein B15 (191 aa).

The Reticulon domain occupies 13–191; it reads VADLCLWKDK…SKIPRAPKVE (179 aa). Helical transmembrane passes span 23–43, 47–67, and 122–142; these read INSGITLVMATLFWFLLEFME, VPLLCSILLLLMLILFLWAKF, and VAIIYNIGSYISLLTILYICL.

It is found in the endoplasmic reticulum membrane. This chain is Reticulon-like protein B15 (RTNLB15), found in Arabidopsis thaliana (Mouse-ear cress).